Here is a 780-residue protein sequence, read N- to C-terminus: Subtilisin-like protease SBT1.3 (780 aa).

The N-terminal stretch at 1-25 (MANKNPLQKPFLFIILSINLIFLQA) is a signal peptide. Positions 26–120 (ETTTQISTKK…VIPETRYELH (95 aa)) are cleaved as a propeptide — activation peptide. The 85-residue stretch at 36-120 (TYVIHMDKSA…VIPETRYELH (85 aa)) folds into the Inhibitor I9 domain. Residues 116–628 (RYELHTTRSP…AGHIDPLRAT (513 aa)) enclose the Peptidase S8 domain. The active-site Charge relay system is Asp154. A glycan (N-linked (GlcNAc...) asparagine) is linked at Asn165. His227 (charge relay system) is an active-site residue. A PA domain is found at 384 to 477 (KQYPLVYLGR…GEKEGKLIKQ (94 aa)). Residue Asn394 is glycosylated (N-linked (GlcNAc...) asparagine). Ser560 serves as the catalytic Charge relay system. Asn663 and Asn731 each carry an N-linked (GlcNAc...) asparagine glycan.

This sequence belongs to the peptidase S8 family.

The protein resides in the secreted. This Arabidopsis thaliana (Mouse-ear cress) protein is Subtilisin-like protease SBT1.3.